The chain runs to 198 residues: Large ribosomal subunit protein eL19 (198 aa).

Disordered regions lie at residues 66-85 (YEEA…RGTA) and 150-177 (KRAK…EERQ). Basic residues predominate over residues 71–83 (RKGRHTGYGKRRG). The span at 160 to 177 (QARRDKNKESRKRREERQ) shows a compositional bias: basic and acidic residues.

This sequence belongs to the eukaryotic ribosomal protein eL19 family.

The chain is Large ribosomal subunit protein eL19 (rpl-19) from Caenorhabditis elegans.